The following is a 295-amino-acid chain: Elongation factor Ts (295 aa).

The involved in Mg(2+) ion dislocation from EF-Tu stretch occupies residues 79–82 (TDFV).

Belongs to the EF-Ts family.

It localises to the cytoplasm. Associates with the EF-Tu.GDP complex and induces the exchange of GDP to GTP. It remains bound to the aminoacyl-tRNA.EF-Tu.GTP complex up to the GTP hydrolysis stage on the ribosome. In Mycoplasma mycoides subsp. mycoides SC (strain CCUG 32753 / NCTC 10114 / PG1), this protein is Elongation factor Ts.